Here is a 164-residue protein sequence, read N- to C-terminus: S-ribosylhomocysteine lyase (164 aa).

Fe cation contacts are provided by histidine 54, histidine 58, and cysteine 128.

Belongs to the LuxS family. Homodimer. The cofactor is Fe cation.

It catalyses the reaction S-(5-deoxy-D-ribos-5-yl)-L-homocysteine = (S)-4,5-dihydroxypentane-2,3-dione + L-homocysteine. Involved in the synthesis of autoinducer 2 (AI-2) which is secreted by bacteria and is used to communicate both the cell density and the metabolic potential of the environment. The regulation of gene expression in response to changes in cell density is called quorum sensing. Catalyzes the transformation of S-ribosylhomocysteine (RHC) to homocysteine (HC) and 4,5-dihydroxy-2,3-pentadione (DPD). This chain is S-ribosylhomocysteine lyase, found in Campylobacter jejuni subsp. jejuni serotype O:23/36 (strain 81-176).